A 427-amino-acid polypeptide reads, in one-letter code: Probable purple acid phosphatase 20 (427 aa).

An N-terminal signal peptide occupies residues 1-21; it reads MVKVLGLVAILLIVLAGNVLS. A glycan (N-linked (GlcNAc...) asparagine) is linked at Asn-85. Residues Asp-147, Asp-174, and Tyr-177 each contribute to the Fe cation site. Asp-174 contacts Zn(2+). Zn(2+) is bound by residues Asn-207 and His-291. Asn-207 is a substrate binding site. His-301 acts as the Proton donor in catalysis. A Zn(2+)-binding site is contributed by His-330. 330–332 is a substrate binding site; it reads HVH. Fe cation is bound at residue His-332. A glycan (N-linked (GlcNAc...) asparagine) is linked at Asn-392.

It belongs to the metallophosphoesterase superfamily. Purple acid phosphatase family. Homodimer. Fe cation serves as cofactor. Zn(2+) is required as a cofactor. In terms of tissue distribution, expressed flowers and siliques.

It is found in the secreted. The enzyme catalyses a phosphate monoester + H2O = an alcohol + phosphate. This chain is Probable purple acid phosphatase 20 (PAP20), found in Arabidopsis thaliana (Mouse-ear cress).